A 190-amino-acid polypeptide reads, in one-letter code: Probable GTP-binding protein EngB (190 aa).

An EngB-type G domain is found at 22–190; it reads VKREVAFAGR…LNELLKILIP (169 aa). Residues 30–37, 56–60, 74–77, 141–144, and 173–175 contribute to the GTP site; these read GRSNVGKS, GKTRS, DLPG, TKTD, and FSA. Ser37 and Thr58 together coordinate Mg(2+).

It belongs to the TRAFAC class TrmE-Era-EngA-EngB-Septin-like GTPase superfamily. EngB GTPase family. It depends on Mg(2+) as a cofactor.

Necessary for normal cell division and for the maintenance of normal septation. This Kosmotoga olearia (strain ATCC BAA-1733 / DSM 21960 / TBF 19.5.1) protein is Probable GTP-binding protein EngB.